Reading from the N-terminus, the 1095-residue chain is Voltage-gated inwardly rectifying potassium channel KCNH3 (1095 aa).

Topologically, residues 1-228 (MPAMRGLLAP…HCGALRATWD (228 aa)) are cytoplasmic. The PAS domain occupies 18-90 (IATRFDGTHS…QQIRKALDEH (73 aa)). The PAC domain occupies 93–145 (FKAELILYRKSGLPFWCLLDVIPIKNEKGEVALFLVSHKDISETKNRGGPDNW). Residues 137–150 (KNRGGPDNWKERGG) show a composition bias toward basic and acidic residues. Positions 137 to 161 (KNRGGPDNWKERGGGRRRYGRAGSK) are disordered. Residues 229-249 (GFILLATLYVAVTVPYSVCVS) traverse the membrane as a helical segment. Residues 250 to 259 (TAREPSAARG) lie on the Extracellular side of the membrane. A helical membrane pass occupies residues 260–280 (PPSVCDLAVEVLFILDIVLNF). Residues 281–302 (RTTFVSKSGQVVFAPKSICLHY) lie on the Cytoplasmic side of the membrane. A helical membrane pass occupies residues 303–323 (VTTWFLLDVIAALPFDLLHAF). Topologically, residues 324 to 331 (KVNVYVGA) are extracellular. A helical; Voltage-sensor membrane pass occupies residues 332–352 (HLLKTVRLLRLLRLLPRLDRY). The Cytoplasmic segment spans residues 353–361 (SQYSAVVLT). The helical transmembrane segment at 362–382 (LLMAVFALLAHWVACVWFYIG) threads the bilayer. Residues 383–464 (QQEIESSESE…GGPSLRSAYI (82 aa)) lie on the Extracellular side of the membrane. The segment at 417–447 (PDGGNSSGQSENCSSSSSSSGSGGGRGSEAN) is disordered. The span at 419-436 (GGNSSGQSENCSSSSSSS) shows a compositional bias: low complexity. 3 N-linked (GlcNAc...) asparagine glycosylation sites follow: Asn-421, Asn-428, and Asn-447. Positions 465–485 (TSLYFALSSLTSVGFGNVSAN) form an intramembrane region, pore-forming. The short motif at 476–481 (SVGFGN) is the Selectivity filter element. Topologically, residues 486–490 (TDTEK) are extracellular. Residues 491 to 511 (IFSICTMLIGALMHAVVFGNV) form a helical membrane-spanning segment. Residues 512-1095 (TAIIQRMYAR…QWTQEEGTGV (584 aa)) are Cytoplasmic-facing. Residue 593–708 (LFEAASRGCL…FAPRFSRGLR (116 aa)) coordinates a nucleoside 3',5'-cyclic phosphate. Disordered stretches follow at residues 740 to 823 (EEKE…LPPM), 854 to 883 (VGQS…PSEA), and 965 to 1069 (GSVL…PWDP). A compositionally biased stretch (basic residues) spans 784–796 (TAPRPRLGGRGRP). Positions 857–872 (SGPECSSSPSPGTESG) are enriched in low complexity. The span at 974 to 991 (HPRPGQPPPLMAPWPWGP) shows a compositional bias: pro residues.

This sequence belongs to the potassium channel family. H (Eag) (TC 1.A.1.20) subfamily. Kv12.2/KCNH3 sub-subfamily. The potassium channel is probably composed of a homo- or heterotetrameric complex of pore-forming alpha subunits that can associate with modulating beta subunits. Interacts with KCNE1 and KCNE3; these interactions regulate KCNH3 trafficking to the plasma membrane and its subsequent voltage-gated potassium channel activity. Post-translationally, N-glycosylated. N-glycosylation mediates traffick to the cell membrane but is not necessary for voltage-gated potassium channel activity. As to expression, detected in brain, but not in other tissues.

The protein resides in the cell membrane. It catalyses the reaction K(+)(in) = K(+)(out). Functionally, pore-forming (alpha) subunit of a voltage-gated inwardly rectifying potassium channel. Charactherized by a fast rate of activation during depolarization followed by a rapid inactivation at much more depolarized value causing inward rectification due to a C-type inactivation mechanism. Exhibits a rapid recovery from inactivation. The sequence is that of Voltage-gated inwardly rectifying potassium channel KCNH3 from Mus musculus (Mouse).